The primary structure comprises 144 residues: MPPKKKKITAIIKLQINAGKATPAPPVGPALGQHGVNIMEFCKQYNAATESQAGNVVPVEITVYEDRSFTFVTKTPPAARLILKAAGVEKGSGTPHRDKVAKLTPAQVREIAQTKLPDLNATTIEAAEKIIAGTARSMGITVGD.

This sequence belongs to the universal ribosomal protein uL11 family. Part of the ribosomal stalk of the 50S ribosomal subunit. Interacts with L10 and the large rRNA to form the base of the stalk. L10 forms an elongated spine to which L12 dimers bind in a sequential fashion forming a multimeric L10(L12)X complex. One or more lysine residues are methylated.

Forms part of the ribosomal stalk which helps the ribosome interact with GTP-bound translation factors. This chain is Large ribosomal subunit protein uL11, found in Frankia alni (strain DSM 45986 / CECT 9034 / ACN14a).